Here is a 665-residue protein sequence, read N- to C-terminus: LisH domain-containing protein ARMC9 (665 aa).

Positions 7–39 (HESELLGLVKEYLDFAEFEDTLKTFLKECKIKG) constitute a LisH domain. Positions 204-235 (QSNKDVLQQLHQQLVEAERRSMTYLKRYNRIQ) form a coiled coil. A Phosphoserine modification is found at serine 582. Residues 582-603 (SDDDEDEDDEEDHDTMEADLDK) show a composition bias toward acidic residues. Disordered stretches follow at residues 582 to 604 (SDDD…LDKD) and 636 to 665 (RRGT…GYPA).

As to quaternary structure, interacts with TOGARAM1, CCDC66, CEP104, CSPP1 and CEP290. Interacts with NDUFAF2.

The protein resides in the cytoplasm. The protein localises to the cytoskeleton. Its subcellular location is the cilium basal body. It localises to the cell projection. It is found in the cilium. The protein resides in the microtubule organizing center. The protein localises to the centrosome. Its subcellular location is the centriole. Involved in ciliogenesis. It is required for appropriate acetylation and polyglutamylation of ciliary microtubules, and regulation of cilium length. Acts as a positive regulator of hedgehog (Hh)signaling. May participate in the trafficking and/or retention of GLI2 and GLI3 proteins at the ciliary tip. This Bos taurus (Bovine) protein is LisH domain-containing protein ARMC9 (ARMC9).